A 361-amino-acid polypeptide reads, in one-letter code: Geranylgeranyl pyrophosphate synthase 3 (361 aa).

The disordered stretch occupies residues 44 to 63 (DSNGSKELAPNGAQSRVQKP). Isopentenyl diphosphate is bound by residues lysine 81, arginine 84, and histidine 113. Mg(2+) is bound by residues aspartate 120 and aspartate 124. Arginine 129 provides a ligand contact to dimethylallyl diphosphate. Arginine 130 contributes to the isopentenyl diphosphate binding site. The dimethylallyl diphosphate site is built by lysine 207, threonine 208, and glutamine 244. Aspartate 247 serves as a coordination point for Mg(2+). Residues asparagine 251, lysine 261, and lysine 271 each coordinate dimethylallyl diphosphate.

This sequence belongs to the FPP/GGPP synthase family. The cofactor is Mg(2+).

The catalysed reaction is isopentenyl diphosphate + dimethylallyl diphosphate = (2E)-geranyl diphosphate + diphosphate. The enzyme catalyses isopentenyl diphosphate + (2E)-geranyl diphosphate = (2E,6E)-farnesyl diphosphate + diphosphate. It catalyses the reaction isopentenyl diphosphate + (2E,6E)-farnesyl diphosphate = (2E,6E,10E)-geranylgeranyl diphosphate + diphosphate. Functionally, geranylgeranyl pyrophosphate synthase; part of the gene cluster 25 that mediates the biosynthesis of an isoprenoid secondary metabolite. This chain is Geranylgeranyl pyrophosphate synthase 3 (GGS3), found in Zymoseptoria tritici (strain CBS 115943 / IPO323) (Speckled leaf blotch fungus).